A 487-amino-acid chain; its full sequence is Betaine aldehyde dehydrogenase (487 aa).

K(+) is bound by residues I27 and D93. An NAD(+)-binding site is contributed by 149 to 151 (GAW). The active-site Charge relay system is K161. NAD(+) is bound by residues 175-178 (KPSE) and 228-231 (SVPT). The active-site Proton acceptor is E249. Residues G251, C283, and E384 each coordinate NAD(+). C283 (nucleophile) is an active-site residue. Residue C283 is modified to Cysteine sulfenic acid (-SOH). Residues K454 and G457 each contribute to the K(+) site. Catalysis depends on E461, which acts as the Charge relay system.

Belongs to the aldehyde dehydrogenase family. As to quaternary structure, dimer of dimers. It depends on K(+) as a cofactor.

It catalyses the reaction betaine aldehyde + NAD(+) + H2O = glycine betaine + NADH + 2 H(+). It participates in amine and polyamine biosynthesis; betaine biosynthesis via choline pathway; betaine from betaine aldehyde: step 1/1. In terms of biological role, involved in the biosynthesis of the osmoprotectant glycine betaine. Catalyzes the irreversible oxidation of betaine aldehyde to the corresponding acid. The protein is Betaine aldehyde dehydrogenase of Mesorhizobium japonicum (strain LMG 29417 / CECT 9101 / MAFF 303099) (Mesorhizobium loti (strain MAFF 303099)).